The following is a 332-amino-acid chain: Glyceraldehyde-3-phosphate dehydrogenase 2 (332 aa).

NAD(+) is bound by residues 11–12, Asp-32, and Arg-77; that span reads RI. D-glyceraldehyde 3-phosphate is bound by residues 148–150, Thr-179, 208–209, and Arg-231; these read SCT and TG. Residue Cys-149 is the Nucleophile of the active site. Tyr-273 bears the Phosphotyrosine mark. At Thr-274 the chain carries Phosphothreonine. Asn-313 provides a ligand contact to NAD(+).

The protein belongs to the glyceraldehyde-3-phosphate dehydrogenase family. As to quaternary structure, homotetramer.

It is found in the cytoplasm. The catalysed reaction is D-glyceraldehyde 3-phosphate + phosphate + NAD(+) = (2R)-3-phospho-glyceroyl phosphate + NADH + H(+). Its pathway is carbohydrate degradation; glycolysis; pyruvate from D-glyceraldehyde 3-phosphate: step 1/5. The polypeptide is Glyceraldehyde-3-phosphate dehydrogenase 2 (Gapdh2) (Drosophila melanogaster (Fruit fly)).